Consider the following 163-residue polypeptide: Glutathione peroxidase 1 (163 aa).

The active site involves Cys36.

This sequence belongs to the glutathione peroxidase family.

It is found in the cytoplasm. The catalysed reaction is 2 glutathione + H2O2 = glutathione disulfide + 2 H2O. In terms of biological role, may constitute a glutathione peroxidase-like protective system against oxidative stresses. The chain is Glutathione peroxidase 1 (gpx-1) from Caenorhabditis elegans.